The chain runs to 449 residues: Probable glycine dehydrogenase (decarboxylating) subunit 1 (449 aa).

Belongs to the GcvP family. N-terminal subunit subfamily. As to quaternary structure, the glycine cleavage system is composed of four proteins: P, T, L and H. In this organism, the P 'protein' is a heterodimer of two subunits.

The catalysed reaction is N(6)-[(R)-lipoyl]-L-lysyl-[glycine-cleavage complex H protein] + glycine + H(+) = N(6)-[(R)-S(8)-aminomethyldihydrolipoyl]-L-lysyl-[glycine-cleavage complex H protein] + CO2. In terms of biological role, the glycine cleavage system catalyzes the degradation of glycine. The P protein binds the alpha-amino group of glycine through its pyridoxal phosphate cofactor; CO(2) is released and the remaining methylamine moiety is then transferred to the lipoamide cofactor of the H protein. This chain is Probable glycine dehydrogenase (decarboxylating) subunit 1, found in Solibacter usitatus (strain Ellin6076).